We begin with the raw amino-acid sequence, 104 residues long: UPF0125 protein PSPTO_4512 (104 aa).

This sequence belongs to the UPF0125 (RnfH) family.

The protein is UPF0125 protein PSPTO_4512 of Pseudomonas syringae pv. tomato (strain ATCC BAA-871 / DC3000).